The following is a 773-amino-acid chain: Endonuclease MutS2 (773 aa).

Residue 334-341 coordinates ATP; that stretch reads GANAGGKT. Residues 698 to 773 enclose the Smr domain; the sequence is VDLRGMRADV…GDGMTMVTLK (76 aa).

This sequence belongs to the DNA mismatch repair MutS family. MutS2 subfamily. In terms of assembly, homodimer. Binds to stalled ribosomes, contacting rRNA.

Its function is as follows. Endonuclease that is involved in the suppression of homologous recombination and thus may have a key role in the control of bacterial genetic diversity. In terms of biological role, acts as a ribosome collision sensor, splitting the ribosome into its 2 subunits. Detects stalled/collided 70S ribosomes which it binds and splits by an ATP-hydrolysis driven conformational change. Acts upstream of the ribosome quality control system (RQC), a ribosome-associated complex that mediates the extraction of incompletely synthesized nascent chains from stalled ribosomes and their subsequent degradation. Probably generates substrates for RQC. This is Endonuclease MutS2 from Solidesulfovibrio magneticus (strain ATCC 700980 / DSM 13731 / RS-1) (Desulfovibrio magneticus).